The following is a 71-amino-acid chain: Allergen Art v 2 (71 aa).

Post-translationally, glycosylated. High-mannose oligosaccharides (Man(5-9)GlcNAc(2)).

The sequence is that of Allergen Art v 2 from Artemisia vulgaris (Mugwort).